The following is a 533-amino-acid chain: 2,3-bisphosphoglycerate-independent phosphoglycerate mutase (533 aa).

Asp-15 and Ser-65 together coordinate Mn(2+). Ser-65 (phosphoserine intermediate) is an active-site residue. Residues His-126, 156-157 (RD), Arg-188, Arg-194, 258-261 (RPDR), and Lys-331 each bind substrate. Positions 398, 402, 439, 440, and 457 each coordinate Mn(2+).

The protein belongs to the BPG-independent phosphoglycerate mutase family. In terms of assembly, monomer. The cofactor is Mn(2+).

The enzyme catalyses (2R)-2-phosphoglycerate = (2R)-3-phosphoglycerate. It functions in the pathway carbohydrate degradation; glycolysis; pyruvate from D-glyceraldehyde 3-phosphate: step 3/5. In terms of biological role, catalyzes the interconversion of 2-phosphoglycerate and 3-phosphoglycerate. The protein is 2,3-bisphosphoglycerate-independent phosphoglycerate mutase of Trichormus variabilis (strain ATCC 29413 / PCC 7937) (Anabaena variabilis).